We begin with the raw amino-acid sequence, 307 residues long: F-box protein PP2-B7 (307 aa).

In terms of domain architecture, F-box spans 37–83 (PLSLGDLPEECISLIISFTSPRDACVFALVSKTFESAVQSDIVWEKF).

This is F-box protein PP2-B7 (PP2B7) from Arabidopsis thaliana (Mouse-ear cress).